Consider the following 333-residue polypeptide: MSTYYNDHLAAAEKDISSSNFCNLVDASVMLYDEEHRDLLPKKVNSRCQAKTKKQEKESDKRFFDLFPKKRRTSVVTVRNPEQNQQNLHRVSTSSSLLDLNTIPGDSSDPRNELQGLLSSSSSSFLGDYERKTPQNASSSSTLLAEYNTEMANPPNPNSETSLKRKHSDSEPKKAKTPYSWKGREAPEWLVKMMGTMQGSEGPRLIYEKTLTETDVKPVQSRLLMPFNTLIRNDFLTPVELRILLELEDDTDGVGATLVDPWEVKWGVILKKREMKKYSGKGSLNYAIICGWNDIVEANVLEKDDDISIWSFRRGRNGILSFALVLPPPPDMA.

Polar residues-rich tracts occupy residues 76-99 and 134-143; these read VTVR…SLLD and PQNASSSSTL. A disordered region spans residues 76–179; sequence VTVRNPEQNQ…SEPKKAKTPY (104 aa). The segment at residues 220–328 is a DNA-binding region (TF-B3); the sequence is QSRLLMPFNT…ILSFALVLPP (109 aa).

The protein resides in the nucleus. The sequence is that of B3 domain-containing protein At1g32030 from Arabidopsis thaliana (Mouse-ear cress).